We begin with the raw amino-acid sequence, 398 residues long: Dual specificity mitogen-activated protein kinase kinase 2 (398 aa).

The disordered stretch occupies residues Met-1 to Glu-29. Positions Phe-70–Ile-367 constitute a Protein kinase domain. Residues Leu-76–Val-84 and Lys-99 each bind ATP. Asp-192 serves as the catalytic Proton acceptor. 2 positions are modified to phosphoserine; by RAF: Ser-220 and Ser-224.

This sequence belongs to the protein kinase superfamily. STE Ser/Thr protein kinase family. MAP kinase kinase subfamily. Activated by phosphorylation on Ser/Thr catalyzed by MAP kinase kinase kinases (RAF).

It catalyses the reaction L-seryl-[protein] + ATP = O-phospho-L-seryl-[protein] + ADP + H(+). The catalysed reaction is L-threonyl-[protein] + ATP = O-phospho-L-threonyl-[protein] + ADP + H(+). The enzyme catalyses L-tyrosyl-[protein] + ATP = O-phospho-L-tyrosyl-[protein] + ADP + H(+). In terms of biological role, catalyzes the concomitant phosphorylation of a threonine and a tyrosine residue in a Thr-Glu-Tyr sequence located in MAP kinases. Activates the ERK1 and ERK2 MAP kinases. In Gallus gallus (Chicken), this protein is Dual specificity mitogen-activated protein kinase kinase 2 (MAP2K2).